The chain runs to 374 residues: uncharacterized protein (374 aa).

An ATP-binding site is contributed by 29–36 (GSLNSGKS).

Belongs to the archaeal ATPase family.

This is an uncharacterized protein from Methanocaldococcus jannaschii (strain ATCC 43067 / DSM 2661 / JAL-1 / JCM 10045 / NBRC 100440) (Methanococcus jannaschii).